Reading from the N-terminus, the 1369-residue chain is Mediator of RNA polymerase II transcription subunit 23 (1369 aa).

Residues 1337–1369 (TESAAPPPPPMNSGSPAPQPNQVPVSVPLTVTQ) form a disordered region. Pro residues predominate over residues 1341–1357 (APPPPPMNSGSPAPQPN).

Belongs to the Mediator complex subunit 23 family. In terms of assembly, component of the Mediator complex.

Its subcellular location is the nucleus. In terms of biological role, component of the Mediator complex, a coactivator involved in the regulated transcription of nearly all RNA polymerase II-dependent genes. Mediator functions as a bridge to convey information from gene-specific regulatory proteins to the basal RNA polymerase II transcription machinery. Mediator is recruited to promoters by direct interactions with regulatory proteins and serves as a scaffold for the assembly of a functional preinitiation complex with RNA polymerase II and the general transcription factors. The chain is Mediator of RNA polymerase II transcription subunit 23 (med23) from Xenopus laevis (African clawed frog).